The following is a 266-amino-acid chain: Undecaprenyl-diphosphatase (266 aa).

8 helical membrane passes run 1–21 (MMSW…TEFL), 43–63 (ASVF…VIYW), 81–101 (LYGI…GFLF), 107–127 (TLFT…FMLI), 145–165 (LTPK…WPGF), 183–203 (HLAA…ATGY), 219–239 (LFIT…KVFI), and 245–265 (ISLR…YLCI).

It belongs to the UppP family.

It is found in the cell membrane. The catalysed reaction is di-trans,octa-cis-undecaprenyl diphosphate + H2O = di-trans,octa-cis-undecaprenyl phosphate + phosphate + H(+). Catalyzes the dephosphorylation of undecaprenyl diphosphate (UPP). Confers resistance to bacitracin. This is Undecaprenyl-diphosphatase from Lawsonia intracellularis (strain PHE/MN1-00).